The following is a 157-amino-acid chain: 2-C-methyl-D-erythritol 2,4-cyclodiphosphate synthase (157 aa).

Positions 8 and 10 each coordinate a divalent metal cation. 4-CDP-2-C-methyl-D-erythritol 2-phosphate-binding positions include 8 to 10 and 34 to 35; these read DVH and HS. Position 42 (His-42) interacts with a divalent metal cation. 4-CDP-2-C-methyl-D-erythritol 2-phosphate is bound by residues 56–58, 61–65, 100–106, 132–135, Phe-139, and Arg-142; these read DIG, FPDTD, AQAPKMA, and TTTE.

This sequence belongs to the IspF family. In terms of assembly, homotrimer. Requires a divalent metal cation as cofactor.

The catalysed reaction is 4-CDP-2-C-methyl-D-erythritol 2-phosphate = 2-C-methyl-D-erythritol 2,4-cyclic diphosphate + CMP. The protein operates within isoprenoid biosynthesis; isopentenyl diphosphate biosynthesis via DXP pathway; isopentenyl diphosphate from 1-deoxy-D-xylulose 5-phosphate: step 4/6. Functionally, involved in the biosynthesis of isopentenyl diphosphate (IPP) and dimethylallyl diphosphate (DMAPP), two major building blocks of isoprenoid compounds. Catalyzes the conversion of 4-diphosphocytidyl-2-C-methyl-D-erythritol 2-phosphate (CDP-ME2P) to 2-C-methyl-D-erythritol 2,4-cyclodiphosphate (ME-CPP) with a corresponding release of cytidine 5-monophosphate (CMP). In Ectopseudomonas mendocina (strain ymp) (Pseudomonas mendocina), this protein is 2-C-methyl-D-erythritol 2,4-cyclodiphosphate synthase.